We begin with the raw amino-acid sequence, 155 residues long: Acyl-CoA-binding domain-containing protein 3 (155 aa).

The ACB domain maps to L3–A88. Residues K15, Y30–K34, K56, and Y75 contribute to the an acyl-CoA site.

The protein belongs to the ACBP family. As to expression, highly expressed in leaves. Expressed at low levels in roots and seeds.

The protein localises to the cytoplasm. It localises to the cytosol. Binds medium- and long-chain acyl-CoA esters with high affinity. Can interact in vitro with linolenoyl-CoA. Binds phosphatidic acid (PA) and phosphatidylcholine (PC) in vitro. May play a role in the biosynthesis of phospholipids. This chain is Acyl-CoA-binding domain-containing protein 3, found in Oryza sativa subsp. japonica (Rice).